The primary structure comprises 377 residues: Nitric oxide reductase FlRd-NAD(+) reductase (377 aa).

This sequence belongs to the FAD-dependent oxidoreductase family. FAD serves as cofactor.

Its subcellular location is the cytoplasm. The enzyme catalyses 2 reduced [nitric oxide reductase rubredoxin domain] + NAD(+) + H(+) = 2 oxidized [nitric oxide reductase rubredoxin domain] + NADH. Its pathway is nitrogen metabolism; nitric oxide reduction. Its function is as follows. One of at least two accessory proteins for anaerobic nitric oxide (NO) reductase. Reduces the rubredoxin moiety of NO reductase. This is Nitric oxide reductase FlRd-NAD(+) reductase from Salmonella dublin (strain CT_02021853).